The chain runs to 426 residues: Growth-regulating factor 9 (426 aa).

Residues 92-127 form the QLQ domain; that stretch reads PFTPSQWMELEHQALIYKYLNAKAPIPSSLLISISK. The 45-residue stretch at 151–195 folds into the WRC domain; it reads DPEPGRCRRTDGKKWRCSKEAMADHKYCERHINRNRHRSRKPVEN. 2 short sequence motifs (bipartite nuclear localization signal) span residues 156–166 and 184–191; these read RCRRTDGKKWR and RNRHRSRK. Residues 184-222 are disordered; the sequence is RNRHRSRKPVENQSRKTVKETPCAGSLPSSVGQGSFKKA. Over residues 191–202 the composition is skewed to basic and acidic residues; that stretch reads KPVENQSRKTVK.

The protein belongs to the GRF family.

The protein localises to the nucleus. In terms of biological role, transcription activator that plays a regulatory role in gibberellin-induced stem elongation. This Oryza sativa subsp. japonica (Rice) protein is Growth-regulating factor 9 (GRF9).